The primary structure comprises 299 residues: MAGVLRLAGAARSPLARALAPAARRMGASAAAAMEDEAYWTEWEEEEEKARARESAPVAEMCPTGGGGGGPQWVVMGRPGPQKHAHAARLAEVLAVPYISMGTLVRQELSPASSLYKKIANSVNEGKLVPEDIIFGLLTKRLEEGYNKGETGFILDGIPRTHMQAEILDEIVDIDLVLNFKCADNCFMKRRFGGDICPHCGQLFDFSKTASSDRNPSLGSCTWPSQVQHAAVLGLEDSRMEKMRAYAEQTKLLEDYYRKQRKLMELKTSARPGETWQGLVAALHLQHLDASPTPHKLTM.

Residues 1–25 (MAGVLRLAGAARSPLARALAPAARR) constitute a mitochondrion transit peptide. 80-85 (GPQKHA) provides a ligand contact to ATP. An NMP region spans residues 100–129 (SMGTLVRQELSPASSLYKKIANSVNEGKLV). AMP is bound by residues R106, 127 to 129 (KLV), 157 to 160 (GIPR), and Q164. ATP is bound by residues R190 and 203 to 204 (LF). Positions 193–237 (GGDICPHCGQLFDFSKTASSDRNPSLGSCTWPSQVQHAAVLGLED) are LID.

It belongs to the adenylate kinase family.

It is found in the mitochondrion. It carries out the reaction AMP + ATP = 2 ADP. In terms of biological role, catalyzes the reversible transfer of the terminal phosphate group between ATP and AMP. Plays an important role in cellular energy homeostasis and in adenine nucleotide metabolism. This chain is Probable adenylate kinase 7, mitochondrial, found in Oryza sativa subsp. japonica (Rice).